The chain runs to 131 residues: C-type natriuretic peptide 2 (131 aa).

The signal sequence occupies residues Met-1–Gly-22. The propeptide occupies Arg-23–Arg-109. Residues Cys-115 and Cys-131 are joined by a disulfide bond.

Belongs to the natriuretic peptide family. As to expression, expressed in brain and to a low extent in atrium.

It localises to the secreted. Exhibits natriuretic and vasodepressor activity. Has a cGMP-stimulating activity. The polypeptide is C-type natriuretic peptide 2 (Oncorhynchus mykiss (Rainbow trout)).